We begin with the raw amino-acid sequence, 252 residues long: Tumor necrosis factor ligand superfamily member 15 (252 aa).

Residues 1 to 39 are Cytoplasmic-facing; sequence MAEELGLGFGEAVPVEMLPEGCRHRREARTGLAARSKAC. A helical; Signal-anchor for type II membrane protein membrane pass occupies residues 40-60; that stretch reads LALTCCLLSFPILAGLSTLLM. Over 61–252 the chain is Extracellular; sequence TGQLRIPGKD…DKTFFGAFLI (192 aa). The THD domain maps to 96 to 252; it reads PKAHLTIMRQ…DKTFFGAFLI (157 aa). N-linked (GlcNAc...) asparagine glycosylation is present at N134. The cysteines at positions 163 and 203 are disulfide-linked. N-linked (GlcNAc...) asparagine glycosylation is present at N230.

Belongs to the tumor necrosis factor family. Homotrimer.

It localises to the membrane. Receptor for TNFRSF25 and TNFRSF6B. Mediates activation of NF-kappa-B. Inhibits vascular endothelial growth and angiogenesis (in vitro). Promotes activation of caspases and apoptosis. Promotes splenocyte alloactivation. The sequence is that of Tumor necrosis factor ligand superfamily member 15 (Tnfsf15) from Rattus norvegicus (Rat).